Reading from the N-terminus, the 62-residue chain is Large ribosomal subunit protein bL32 (62 aa).

A disordered region spans residues 28 to 62 (SIEPTTGEVHRRHHISPDGFYRGRQVIKAKEQDEE).

The protein belongs to the bacterial ribosomal protein bL32 family.

The polypeptide is Large ribosomal subunit protein bL32 (Thioalkalivibrio sulfidiphilus (strain HL-EbGR7)).